The sequence spans 218 residues: Glutathione S-transferase Mu 1 (218 aa).

The 87-residue stretch at 2–88 folds into the GST N-terminal domain; it reads PMILGYWNVR…YLARKHHLDG (87 aa). Position 7 to 8 (7 to 8) interacts with glutathione; that stretch reads YW. Thr34 carries the phosphothreonine modification. Glutathione-binding positions include 43-46, Lys50, and 59-60; these read RSQW and NL. Residue Ser67 is modified to Phosphoserine. 72 to 73 lines the glutathione pocket; that stretch reads QS. Residues 90–208 form the GST C-terminal domain; the sequence is TEEERIRADI…KSSRYIATPI (119 aa). Tyr116 contributes to the substrate binding site. Ser210 is subject to Phosphoserine.

As to quaternary structure, homodimer.

It is found in the cytoplasm. The catalysed reaction is RX + glutathione = an S-substituted glutathione + a halide anion + H(+). It catalyses the reaction prostaglandin A2 + glutathione = prostaglandin A2-S-(R)-glutathione. The enzyme catalyses prostaglandin J2 + glutathione = prostaglandin J2-S-(R)-glutathione. It carries out the reaction prostaglandin J2 + glutathione = prostaglandin J2-S-(S)-glutathione. The catalysed reaction is prostaglandin A2 + glutathione = prostaglandin A2-S-(S)-glutathione. It catalyses the reaction 11(S)-hydroxy-14(S),15(S)-epoxy-(5Z,8Z,12E)-eicosatrienoate + glutathione = (11S,15S)-dihydroxy-14(R)-S-glutathionyl-(5Z,8Z,12E)-eicosatrienoate. Its function is as follows. Conjugation of reduced glutathione to a wide number of exogenous and endogenous hydrophobic electrophiles. Involved in the formation of glutathione conjugates of both prostaglandin A2 (PGA2) and prostaglandin J2 (PGJ2). Participates in the formation of novel hepoxilin regioisomers. The polypeptide is Glutathione S-transferase Mu 1 (Mus musculus (Mouse)).